We begin with the raw amino-acid sequence, 231 residues long: Ribonuclease 3 (231 aa).

Residues 5–134 form the RNase III domain; it reads QEKLKNDYGL…FLGALFIDQG (130 aa). A Mg(2+)-binding site is contributed by Glu-47. The active site involves Asp-51. Mg(2+) contacts are provided by Asn-120 and Glu-123. Residue Glu-123 is part of the active site. The DRBM domain maps to 160-229; that stretch reads DYKTELQEVL…AENAIKGQNH (70 aa).

It belongs to the ribonuclease III family. As to quaternary structure, homodimer. It depends on Mg(2+) as a cofactor.

It localises to the cytoplasm. The catalysed reaction is Endonucleolytic cleavage to 5'-phosphomonoester.. In terms of biological role, digests double-stranded RNA. Involved in the processing of primary rRNA transcript to yield the immediate precursors to the large and small rRNAs (23S and 16S). Processes some mRNAs, and tRNAs when they are encoded in the rRNA operon. Processes pre-crRNA and tracrRNA of type II CRISPR loci if present in the organism. This Lactococcus lactis subsp. cremoris (strain SK11) protein is Ribonuclease 3.